Here is a 169-residue protein sequence, read N- to C-terminus: Steroid receptor-associated and regulated protein (169 aa).

As to quaternary structure, interacts with 14-3-3 proteins. Expressed in breast tumors with a higher expression level in estrogen receptor-positive cancers.

May regulate the transcriptional function of androgen and estrogen receptors. The chain is Steroid receptor-associated and regulated protein from Homo sapiens (Human).